A 336-amino-acid polypeptide reads, in one-letter code: Cytoplasmic envelopment protein 2 (336 aa).

The protein belongs to the herpesviridae cytoplasmic envelopment protein 2 family. As to quaternary structure, interacts with cytoplasmic envelopment protein 3 and with the capsid.

The protein localises to the virion tegument. It is found in the host cytoplasm. It localises to the host nucleus. Its function is as follows. Plays a critical role in cytoplasmic virus egress. Participates in the final step of tegumentation and envelope acquisition within the host cytoplasm by directly interacting with the capsid. Upon virion binding to target cell, a signaling cascade is triggered to disrupt the interaction with the capsid, thereby preparing capsid uncoating. This chain is Cytoplasmic envelopment protein 2, found in Elephantid herpesvirus 1 (isolate Asian elephant/Berlin/Kiba/1998) (EIHV-1).